The chain runs to 460 residues: tRNA-2-methylthio-N(6)-dimethylallyladenosine synthase (460 aa).

In terms of domain architecture, MTTase N-terminal spans 23–138 (RKVYVHTFGC…LPEMVARAER (116 aa)). 6 residues coordinate [4Fe-4S] cluster: Cys-32, Cys-68, Cys-101, Cys-176, Cys-180, and Cys-183. A Radical SAM core domain is found at 162-394 (ARGRPTAFVT…QAAQRRIAAA (233 aa)). The TRAM domain occupies 397 to 460 (AAELGKVVEV…GGSSLSGTPA (64 aa)).

This sequence belongs to the methylthiotransferase family. MiaB subfamily. As to quaternary structure, monomer. The cofactor is [4Fe-4S] cluster.

Its subcellular location is the cytoplasm. It carries out the reaction N(6)-dimethylallyladenosine(37) in tRNA + (sulfur carrier)-SH + AH2 + 2 S-adenosyl-L-methionine = 2-methylsulfanyl-N(6)-dimethylallyladenosine(37) in tRNA + (sulfur carrier)-H + 5'-deoxyadenosine + L-methionine + A + S-adenosyl-L-homocysteine + 2 H(+). Catalyzes the methylthiolation of N6-(dimethylallyl)adenosine (i(6)A), leading to the formation of 2-methylthio-N6-(dimethylallyl)adenosine (ms(2)i(6)A) at position 37 in tRNAs that read codons beginning with uridine. This chain is tRNA-2-methylthio-N(6)-dimethylallyladenosine synthase, found in Anaeromyxobacter sp. (strain Fw109-5).